A 114-amino-acid chain; its full sequence is UPF0212 protein Mbur_0968 (114 aa).

Belongs to the UPF0212 family.

In Methanococcoides burtonii (strain DSM 6242 / NBRC 107633 / OCM 468 / ACE-M), this protein is UPF0212 protein Mbur_0968.